Reading from the N-terminus, the 168-residue chain is uncharacterized protein (168 aa).

The tract at residues 18-73 is disordered; the sequence is RTTVKTKSHNPKTLYPNNKPRWESKLHAGPKGFQSSRTSEKPGRPDPDPEDDPPIP. The span at 55–64 shows a compositional bias: basic and acidic residues; that stretch reads TSEKPGRPDP. 2 helical membrane passes run 84-104 and 113-133; these read IVVS…VLEV and VPLW…ALGI.

The protein localises to the membrane. This is an uncharacterized protein from Arabidopsis thaliana (Mouse-ear cress).